The primary structure comprises 356 residues: Phosphoserine aminotransferase (356 aa).

R41 provides a ligand contact to L-glutamate. Pyridoxal 5'-phosphate is bound by residues 76 to 77 (AS), W102, T150, D169, and Q192. N6-(pyridoxal phosphate)lysine is present on K193. 234-235 (NT) is a binding site for pyridoxal 5'-phosphate.

It belongs to the class-V pyridoxal-phosphate-dependent aminotransferase family. SerC subfamily. Homodimer. Pyridoxal 5'-phosphate is required as a cofactor.

The protein localises to the cytoplasm. The catalysed reaction is O-phospho-L-serine + 2-oxoglutarate = 3-phosphooxypyruvate + L-glutamate. The enzyme catalyses 4-(phosphooxy)-L-threonine + 2-oxoglutarate = (R)-3-hydroxy-2-oxo-4-phosphooxybutanoate + L-glutamate. Its pathway is amino-acid biosynthesis; L-serine biosynthesis; L-serine from 3-phospho-D-glycerate: step 2/3. It functions in the pathway cofactor biosynthesis; pyridoxine 5'-phosphate biosynthesis; pyridoxine 5'-phosphate from D-erythrose 4-phosphate: step 3/5. Catalyzes the reversible conversion of 3-phosphohydroxypyruvate to phosphoserine and of 3-hydroxy-2-oxo-4-phosphonooxybutanoate to phosphohydroxythreonine. The protein is Phosphoserine aminotransferase of Flavobacterium psychrophilum (strain ATCC 49511 / DSM 21280 / CIP 103535 / JIP02/86).